The following is a 159-amino-acid chain: Transcriptional repressor NrdR (159 aa).

The segment at 3 to 34 is a zinc-finger region; the sequence is CPKCGYNKSSVVDSRQAEEGTTIRRRRECEKC. The 91-residue stretch at 49–139 folds into the ATP-cone domain; that stretch reads LLVIKKDGTR…VYKSFKDVDE (91 aa).

The protein belongs to the NrdR family. Zn(2+) serves as cofactor.

Functionally, negatively regulates transcription of bacterial ribonucleotide reductase nrd genes and operons by binding to NrdR-boxes. The polypeptide is Transcriptional repressor NrdR (Streptococcus agalactiae serotype Ia (strain ATCC 27591 / A909 / CDC SS700)).